A 282-amino-acid polypeptide reads, in one-letter code: NADH-ubiquinone oxidoreductase chain 2 (282 aa).

7 consecutive transmembrane segments (helical) span residues 17–37, 58–78, 87–107, 115–135, 166–186, 202–222, and 232–252; these read ILTNNVIVWWSIFLLMTVVFI, SLGLLFLLCSGGLLQFFIILL, FWIFNVTNNIFNYGLMWFLTF, ILLQIFWLSSVYILLFGLLIC, FSMFNTFYLFIYYFVLMVLLI, TTLVFLNIPFSVSFFVKIFSL, and FTLFLLFTMFLSVLAFSFWLI.

It belongs to the complex I subunit 2 family.

It localises to the mitochondrion inner membrane. The catalysed reaction is a ubiquinone + NADH + 5 H(+)(in) = a ubiquinol + NAD(+) + 4 H(+)(out). Core subunit of the mitochondrial membrane respiratory chain NADH dehydrogenase (Complex I) that is believed to belong to the minimal assembly required for catalysis. Complex I functions in the transfer of electrons from NADH to the respiratory chain. The immediate electron acceptor for the enzyme is believed to be ubiquinone. The chain is NADH-ubiquinone oxidoreductase chain 2 from Caenorhabditis elegans.